The following is a 205-amino-acid chain: Probable GTP-binding protein EngB (205 aa).

Residues 27-201 (TGIEIAFAGR…AVKLDFWFSP (175 aa)) form the EngB-type G domain. GTP-binding positions include 35–42 (GRSNAGKS), 62–66 (GRTQL), 80–83 (DLPG), 147–150 (TKAD), and 180–182 (FSA). The Mg(2+) site is built by serine 42 and threonine 64.

Belongs to the TRAFAC class TrmE-Era-EngA-EngB-Septin-like GTPase superfamily. EngB GTPase family. It depends on Mg(2+) as a cofactor.

Necessary for normal cell division and for the maintenance of normal septation. The chain is Probable GTP-binding protein EngB from Haemophilus influenzae (strain PittGG).